Consider the following 192-residue polypeptide: uncharacterized protein (192 aa).

This is an uncharacterized protein from Magallana gigas (Pacific oyster).